Here is a 156-residue protein sequence, read N- to C-terminus: MSKFLLQSHSANACLLTLLLTLASNLDISLANFEHSCNGYMRPHPRGLCGEDLHVIISNLCSSLGGNRRFLAKYMVKRDTENVNDKLRGILLNKKEAFSYLTKREASGSITCECCFNQCRIFELAQYCRLPDHFFSRISRTGRSNSGHAQLEDNFS.

An N-terminal signal peptide occupies residues 1–31 (MSKFLLQSHSANACLLTLLLTLASNLDISLA). 4 disulfide bridges follow: Cys37/Cys114, Cys49/Cys119, Cys61/Cys128, and Cys112/Cys115. Positions 79-93 (DTENVNDKLRGILLN) are cleaved as a propeptide — c peptide beta. Positions 96–102 (EAFSYLT) are cleaved as a propeptide — c peptide alpha. A propeptide spans 141–156 (TGRSNSGHAQLEDNFS) (d peptide). The propeptide at 144–156 (SNSGHAQLEDNFS) is d peptide short form. Glu152 carries the 4-carboxyglutamate modification.

It belongs to the insulin family. As to quaternary structure, heterodimer of a B chain or a B chain' and an A chain probably linked by three disulfide bonds. As to expression, expressed in the central region of the cerebral ganglia mostly within the F and C clusters.

The protein localises to the secreted. Its function is as follows. Involved in glucose metabolism. The polypeptide is Insulin (PIN) (Aplysia californica (California sea hare)).